A 180-amino-acid chain; its full sequence is GTP cyclohydrolase 1 (180 aa).

The Zn(2+) site is built by C71, H74, and C142.

The protein belongs to the GTP cyclohydrolase I family. Toroid-shaped homodecamer, composed of two pentamers of five dimers.

It catalyses the reaction GTP + H2O = 7,8-dihydroneopterin 3'-triphosphate + formate + H(+). The protein operates within cofactor biosynthesis; 7,8-dihydroneopterin triphosphate biosynthesis; 7,8-dihydroneopterin triphosphate from GTP: step 1/1. The protein is GTP cyclohydrolase 1 of Helicobacter pylori (strain HPAG1).